The primary structure comprises 396 residues: 1-deoxy-D-xylulose 5-phosphate reductoisomerase (396 aa).

Positions 13, 14, 15, 16, and 127 each coordinate NADPH. K128 contributes to the 1-deoxy-D-xylulose 5-phosphate binding site. An NADPH-binding site is contributed by E129. Position 153 (D153) interacts with Mn(2+). The 1-deoxy-D-xylulose 5-phosphate site is built by S154, E155, S184, and H207. E155 contributes to the Mn(2+) binding site. G213 serves as a coordination point for NADPH. Residues S220, N225, K226, and E229 each contribute to the 1-deoxy-D-xylulose 5-phosphate site. E229 contacts Mn(2+).

It belongs to the DXR family. Mg(2+) is required as a cofactor. It depends on Mn(2+) as a cofactor.

The enzyme catalyses 2-C-methyl-D-erythritol 4-phosphate + NADP(+) = 1-deoxy-D-xylulose 5-phosphate + NADPH + H(+). It functions in the pathway isoprenoid biosynthesis; isopentenyl diphosphate biosynthesis via DXP pathway; isopentenyl diphosphate from 1-deoxy-D-xylulose 5-phosphate: step 1/6. Its function is as follows. Catalyzes the NADPH-dependent rearrangement and reduction of 1-deoxy-D-xylulose-5-phosphate (DXP) to 2-C-methyl-D-erythritol 4-phosphate (MEP). The polypeptide is 1-deoxy-D-xylulose 5-phosphate reductoisomerase (Pseudomonas fluorescens (strain SBW25)).